The chain runs to 246 residues: MSGHSKWHNIQAKKGKMDAKRGKIFTKIGRELIIASKEGGSNPDTNSKLRDVIAKARANNMPQDTISRAIKKGAGELEGVNYEEMTYEGYGPNGVAFVVSTLTDNKNRTAGNVRAAFSKHGGNLGETGCVGWMFQSKGQMIIERNEDMDEDEIMMVALDAGAEDFESSEEVFEIITTPESFGEVREKLEAEGFEFISAEVTMIPDTTIEISMERAAGLQKLIDKLEDDDDVQNVYHNAEFPEEWEG.

It belongs to the TACO1 family.

It is found in the cytoplasm. The sequence is that of Probable transcriptional regulatory protein CTC_02215 from Clostridium tetani (strain Massachusetts / E88).